We begin with the raw amino-acid sequence, 118 residues long: Disulfide bond formation protein (118 aa).

The N-terminal stretch at 1-27 (MRAKWLWMTAVGSLLITVLTAWGWAAA) is a signal peptide. The Thioredoxin domain maps to 28–114 (SSQDSKIVYV…VAEAVLRSFF (87 aa)). Cys42 and Cys45 are joined by a disulfide.

The protein belongs to the thioredoxin family.

It localises to the secreted. Functionally, stimulates the oxidation and reduction of disulfide bonds in vitro. The protein is Disulfide bond formation protein (bdb) of Brevibacillus choshinensis.